Reading from the N-terminus, the 126-residue chain is uncharacterized protein (126 aa).

Thr68 bears the Phosphothreonine mark.

This is an uncharacterized protein from Pseudomonas aeruginosa (strain UCBPP-PA14).